The following is a 355-amino-acid chain: Holliday junction branch migration complex subunit RuvB (355 aa).

A disordered region spans residues M1–R43. The large ATPase domain (RuvB-L) stretch occupies residues M4–Y203. Positions F7–I17 are enriched in basic and acidic residues. Residues L42, R43, G84, K87, T88, S89, E150–F152, R193, Y203, and R240 contribute to the ATP site. A Mg(2+)-binding site is contributed by T88. The tract at residues E204–G274 is small ATPAse domain (RuvB-S). The interval H277–G355 is head domain (RuvB-H). DNA-binding residues include R313, R332, and R337.

Belongs to the RuvB family. In terms of assembly, homohexamer. Forms an RuvA(8)-RuvB(12)-Holliday junction (HJ) complex. HJ DNA is sandwiched between 2 RuvA tetramers; dsDNA enters through RuvA and exits via RuvB. An RuvB hexamer assembles on each DNA strand where it exits the tetramer. Each RuvB hexamer is contacted by two RuvA subunits (via domain III) on 2 adjacent RuvB subunits; this complex drives branch migration. In the full resolvosome a probable DNA-RuvA(4)-RuvB(12)-RuvC(2) complex forms which resolves the HJ.

It is found in the cytoplasm. The enzyme catalyses ATP + H2O = ADP + phosphate + H(+). Functionally, the RuvA-RuvB-RuvC complex processes Holliday junction (HJ) DNA during genetic recombination and DNA repair, while the RuvA-RuvB complex plays an important role in the rescue of blocked DNA replication forks via replication fork reversal (RFR). RuvA specifically binds to HJ cruciform DNA, conferring on it an open structure. The RuvB hexamer acts as an ATP-dependent pump, pulling dsDNA into and through the RuvAB complex. RuvB forms 2 homohexamers on either side of HJ DNA bound by 1 or 2 RuvA tetramers; 4 subunits per hexamer contact DNA at a time. Coordinated motions by a converter formed by DNA-disengaged RuvB subunits stimulates ATP hydrolysis and nucleotide exchange. Immobilization of the converter enables RuvB to convert the ATP-contained energy into a lever motion, pulling 2 nucleotides of DNA out of the RuvA tetramer per ATP hydrolyzed, thus driving DNA branch migration. The RuvB motors rotate together with the DNA substrate, which together with the progressing nucleotide cycle form the mechanistic basis for DNA recombination by continuous HJ branch migration. Branch migration allows RuvC to scan DNA until it finds its consensus sequence, where it cleaves and resolves cruciform DNA. This chain is Holliday junction branch migration complex subunit RuvB, found in Rubrobacter xylanophilus (strain DSM 9941 / JCM 11954 / NBRC 16129 / PRD-1).